Consider the following 545-residue polypeptide: 4-coumarate--CoA ligase 2 (545 aa).

Positions 192, 193, 194, 195, 196, and 200 each coordinate ATP. (E)-4-coumaroyl-AMP is bound by residues tyrosine 242 and serine 246. Lysine 263 contributes to the CoA binding site. The interval 265–334 (DIAQFLELIP…AKFPNAKLGQ (70 aa)) is SBD1. 5 residues coordinate (E)-4-coumaroyl-AMP: alanine 312, glutamine 334, glycine 335, threonine 339, and methionine 347. Positions 334, 335, and 339 each coordinate ATP. The SBD2 stretch occupies residues 335–402 (GYGMTEAGPV…IRGDQIMKGY (68 aa)). Residues aspartate 423 and arginine 438 each contribute to the ATP site. (E)-4-coumaroyl-AMP is bound by residues lysine 440 and lysine 444. 2 residues coordinate CoA: lysine 446 and glycine 447. Lysine 529 contacts ATP.

It belongs to the ATP-dependent AMP-binding enzyme family. Requires Mg(2+) as cofactor.

The enzyme catalyses (E)-4-coumarate + ATP + CoA = (E)-4-coumaroyl-CoA + AMP + diphosphate. The catalysed reaction is (E)-4-coumarate + ATP + H(+) = (E)-4-coumaroyl-AMP + diphosphate. It catalyses the reaction (E)-4-coumaroyl-AMP + CoA = (E)-4-coumaroyl-CoA + AMP + H(+). It participates in phytoalexin biosynthesis; 3,4',5-trihydroxystilbene biosynthesis; 3,4',5-trihydroxystilbene from trans-4-coumarate: step 1/2. Functionally, carboxylate--CoA ligase that may use 4-coumarate as substrate. Follows a two-step reaction mechanism, wherein the carboxylate substrate first undergoes adenylation by ATP, followed by a thioesterification in the presence of CoA to yield the final CoA thioester. The polypeptide is 4-coumarate--CoA ligase 2 (4CL2) (Solanum tuberosum (Potato)).